Consider the following 2531-residue polypeptide: Probable polyketide synthase 26 (2531 aa).

Positions 10-433 (QEDIAIIGFR…GSNCCLVLTE (424 aa)) constitute a Ketosynthase family 3 (KS3) domain. Catalysis depends on for beta-ketoacyl synthase activity residues Cys174, His316, and His356. Positions 620–653 (GINPSFIVGHSLGELPMAFCSGMIDFDTVCYLLY) are acyl/malonyl transferase. The active-site For acyl/malonyl transferase activity is the Ser630. Positions 915 to 1036 (MDTLGFSNEK…ANYHLSHRDD (122 aa)) are N-terminal hotdog fold. Residues 915 to 1206 (MDTLGFSNEK…LKSLIPLKDP (292 aa)) form the PKS/mFAS DH domain. His948 functions as the Proton acceptor; for dehydratase activity in the catalytic mechanism. The interval 1055–1206 (NLTKLSKNQF…LKSLIPLKDP (152 aa)) is C-terminal hotdog fold. Asp1117 functions as the Proton donor; for dehydratase activity in the catalytic mechanism. Residues 2431 to 2509 (ASENPVKDLL…DNIKILTDSY (79 aa)) form the Carrier domain. Ser2468 is subject to O-(pantetheine 4'-phosphoryl)serine.

The cofactor is pantetheine 4'-phosphate.

In terms of biological role, probable polyketide synthase. The chain is Probable polyketide synthase 26 (pks26) from Dictyostelium discoideum (Social amoeba).